The primary structure comprises 770 residues: Metabotropic glutamate receptor-like protein F (770 aa).

An N-terminal signal peptide occupies residues 1-22 (MKIKNFIYFLIYFIFLFKVING). Residues 23–370 (QNKTCKISVL…STVDYPESLK (348 aa)) are Extracellular-facing. N24, N185, N260, N286, N319, and N344 each carry an N-linked (GlcNAc...) asparagine glycan. The chain crosses the membrane as a helical span at residues 371–391 (IGVTVVSGFCIFLCLISMIIV). Over 392–405 (IKFKEAKVIKSSSP) the chain is Cytoplasmic. The helical transmembrane segment at 406-426 (IFCLLILFGCIVIFVGCIMFA) threads the bilayer. Over 427–442 (RSPTDGSCRSRVWLLS) the chain is Extracellular. Residues 443 to 463 (LGYTIFLGNLMVKNWRIWLLF) form a helical membrane-spanning segment. Residues 464 to 483 (DNPKLKKRAITNWKLYPWVS) are Cytoplasmic-facing. A helical transmembrane segment spans residues 484 to 504 (GIVIIDIVILSIWQALGDIVA). Residues 505-528 (ESRTGIDSLTKYEYRNVCASSDQG) lie on the Extracellular side of the membrane. A helical transmembrane segment spans residues 529 to 549 (SIALYLLLVFHGLILLVACFI). Residues 550 to 565 (SFKIKVVDIEEFNESK) lie on the Cytoplasmic side of the membrane. A helical transmembrane segment spans residues 566–586 (PITTSVYIITFCLFIVIPIMV). Residues 587 to 594 (SSPTVTTQ) lie on the Extracellular side of the membrane. The chain crosses the membrane as a helical span at residues 595-615 (TTIICICALITTMLSIILLFG). At 616–770 (TKFFKMITVG…GQTEIDSNDV (155 aa)) the chain is on the cytoplasmic side. The interval 639–740 (SSHSQRTKSS…EEKQKDEEEI (102 aa)) is disordered. 2 stretches are compositionally biased toward basic and acidic residues: residues 676-693 (SSEK…KDHM) and 730-740 (NEEKQKDEEEI). The stretch at 715–760 (REQINDNIILENNNDNEEKQKDEEEIKEEKLLVSEIQAKRLSLEQN) forms a coiled coil.

This sequence in the N-terminal section; belongs to the BMP lipoprotein family. The protein in the C-terminal section; belongs to the G-protein coupled receptor 3 family. GABA-B receptor subfamily.

The protein resides in the membrane. This Dictyostelium discoideum (Social amoeba) protein is Metabotropic glutamate receptor-like protein F (grlF).